Reading from the N-terminus, the 378-residue chain is Quinolinate synthase (378 aa).

Residues H59 and S80 each contribute to the iminosuccinate site. C125 provides a ligand contact to [4Fe-4S] cluster. Iminosuccinate contacts are provided by residues 151–153 and S168; that span reads YAN. C212 serves as a coordination point for [4Fe-4S] cluster. Iminosuccinate-binding positions include 238–240 and T255; that span reads HPE. C309 is a [4Fe-4S] cluster binding site.

This sequence belongs to the quinolinate synthase family. Type 1 subfamily. The cofactor is [4Fe-4S] cluster.

The protein resides in the cytoplasm. It carries out the reaction iminosuccinate + dihydroxyacetone phosphate = quinolinate + phosphate + 2 H2O + H(+). Its pathway is cofactor biosynthesis; NAD(+) biosynthesis; quinolinate from iminoaspartate: step 1/1. Functionally, catalyzes the condensation of iminoaspartate with dihydroxyacetone phosphate to form quinolinate. This Burkholderia pseudomallei (strain 1106a) protein is Quinolinate synthase.